Reading from the N-terminus, the 757-residue chain is MYRRSYVFQTRKEQYERAEEAPRAAEPDRLAEARAAAPNLAALQGLGERVAAHVQRARALEQRHAVLRRQLDAFQRLDELAGPEDALARHVEGNRQRARDLAAERTRLERQGAEAQRALDEFRSKYENECECQLLLKEMLERLNKEADEALLRNLRLQIEAQFLQDDISAAKDRYKKNLLEIQTYVTILQQIIQTTPQAAAITSGMREEKLLTEREAAALQCQLEDGREMICLLQAQRTELQAQTAALEQAIRDAHECYDDEIQLYNEQIDTLRKEIEEAERSLERSSYDCRQLVVVQQTLRNELDRYHRIIENEGNRLSSAFIETPITLYTASHGASLSPRHGGKDLTRAVQDITAAKPRLKGLPKNLPRKKEMVAKDRADEILEETLLRGPEDMKPGRVVIKEEGESKLEPGDEEASPPTQEGAPEDVPDGGKISKAFEKLGKMIKEKVKGPKEPEPPADLYTKGRYVMVSGDGSFVDPGFCVFSVPAKGGVVVSKGDDSVPPDSGVEPSPQQPEPPLEEGQGPPQEKEDGLKEEGGPPEGKGEPPEGKGDSVKEEGGPPEGKGDGVKEEGGPPEGKGDGVKEEGGPPEGKGDGVKKEGEPPEGKGEGLKEEEGPLQKKEDGRPPTPHPADKGDEKNAKELKGLQGKQDDQKEEGARGPCPMVAPGPEGPSTPRSQGPQVILGGSEGHGARSGSRLARSPPRKLAYEKVEVMESIEKFSTESIQTYEETAVIVETMIEKTKANKKKLGEKGSSSA.

Positions 1–39 (MYRRSYVFQTRKEQYERAEEAPRAAEPDRLAEARAAAPN) are head. The residue at position 5 (serine 5) is a Phosphoserine. The 281-residue stretch at 39–319 (NLAALQGLGE…RIIENEGNRL (281 aa)) folds into the IF rod domain. Residues 40–74 (LAALQGLGERVAAHVQRARALEQRHAVLRRQLDAF) form a coil 1A region. Alanine 41 bears the N-acetylalanine mark. The interval 75 to 83 (QRLDELAGP) is linker 1. The coil 1B stretch occupies residues 84–183 (EDALARHVEG…RYKKNLLEIQ (100 aa)). The segment at 184 to 200 (TYVTILQQIIQTTPQAA) is linker 12. A coil 2 region spans residues 201–319 (AITSGMREEK…RIIENEGNRL (119 aa)). The segment at 320–756 (SSAFIETPIT…KKLGEKGSSS (437 aa)) is tail. Residues serine 340 and serine 419 each carry the phosphoserine modification. 2 disordered regions span residues 406–436 (EGES…GGKI) and 493–705 (GVVV…PPRK). Glycine 433 carries N-myristoyl glycine lipidation. Residues 493–512 (GVVVSKGDDSVPPDSGVEPS) are compositionally biased toward low complexity. The residue at position 512 (serine 512) is a Phosphoserine. The span at 528–658 (QEKEDGLKEE…KQDDQKEEGA (131 aa)) shows a compositional bias: basic and acidic residues. Repeat 1 spans residues 532–545 (DGLKEEGGPPEGKG). Residues 532–622 (DGLKEEGGPP…EEEGPLQKKE (91 aa)) are 7 X 14 AA tandem repeats. The stretch at 546 to 552 (EPPEGKG) is one 2; truncated repeat. 5 repeat units span residues 553-566 (DSVK…EGKG), 567-580 (DGVK…EGKG), 581-594 (DGVK…EGKG), 595-608 (DGVK…EGKG), and 609-622 (EGLK…QKKE). Phosphothreonine is present on residues threonine 628 and threonine 674. A phosphoserine mark is found at serine 701, serine 754, and serine 755.

This sequence belongs to the intermediate filament family. Part of a complex required for lens intermediate filament formation composed of BFSP1, BFSP2 and CRYAA. Identified in a complex that contains VIM, EZR, AHNAK, BFSP1, BFSP2, ANK2, PLEC, PRX and spectrin. Found in a complex composed of PPL (via C-terminal linker domain), BFSP1 and BFSP2 in the retinal lens. Within the complex interacts with BFSP2. Interacts (via C-terminus) with MIP (via C-terminus) in aged lens fiber cells. In terms of processing, proteolytically cleaved during lens cell fiber differentiation with increased fragmentation as fiber cell age increases. Myristoylated at Gly-433 following proteolytic cleavage at Asp-432. Post-translationally, acetylated at Ala-41 following proteolytic cleavage at Leu-40. Abundantly expressed in both the inner and outer cortex of the retina, expressed at a lower level in the nucleus of the retina (at protein level). Detected in eye lens fiber cells (at protein level).

It localises to the cell membrane. Its subcellular location is the cytoplasm. The protein resides in the cytoskeleton. It is found in the cell cortex. In terms of biological role, required for the correct formation of lens intermediate filaments as part of a complex composed of BFSP1, BFSP2 and CRYAA. Involved in altering the calcium regulation of MIP water permeability. This is Filensin (BFSP1) from Bos taurus (Bovine).